The following is a 576-amino-acid chain: Sodium/hydrogen exchanger 8 (576 aa).

The next 11 helical transmembrane spans lie at 55–75 (MTIF…HLLI), 79–99 (LHFL…GAVI), 118–138 (PNMF…YSLH), 151–171 (LFAV…IYFL), 186–206 (FAFG…IFNA), 256–276 (LGYF…TGLI), 306–326 (GLAE…GIVM), 349–369 (VAFL…FSFP), 374–394 (ISFV…NIFP), 412–432 (MFIM…SLHL), and 446–466 (TTIV…MPLI). A Phosphothreonine modification is found at Thr-505. Ser-566 and Ser-568 each carry phosphoserine.

It belongs to the monovalent cation:proton antiporter 1 (CPA1) transporter (TC 2.A.36) family. As to expression, predominantly expressed in the liver, skeletal muscle, kidney, and testis. Expressed in both renal cortex and medulla. Detected throughout the entire gastrointestinal tract, with high expression detected in stomach, duodenum and ascending colon. In gastric epithelium; expressed in the glands within the fundus and pylorus regions.

It is found in the golgi apparatus membrane. The protein localises to the golgi apparatus. Its subcellular location is the trans-Golgi network membrane. The protein resides in the endosome. It localises to the multivesicular body membrane. It is found in the apical cell membrane. The protein localises to the cytoplasmic vesicle. Its subcellular location is the secretory vesicle. The protein resides in the acrosome. It catalyses the reaction Na(+)(in) + H(+)(out) = Na(+)(out) + H(+)(in). In terms of biological role, na(+)/H(+) antiporter. Mediates the electoneutral exchange of intracellular H(+) ions for extracellular Na(+) in 1:1 stoichiometry. Acts as an Na(+)/H(+) exchanger in the trans-Golgi. Contributes to the regulation of pH regulation of Golgi apparatus, and consequently, in protein trafficking and endosomal morphology. Plays a crucial role in germ cells in acrosome biogenesis and sperm development, probably by playing a role in the fusion of the Golgi-derived vesicles that form the acrosomal cap. Can also be active at the cell surface of specialized cells. In the small intestine, plays a major physiological role in transepithelial absorption of Na(+). Regulates intracellular pH homeostasis of intestinal epithelial cells. Acts as an important regulator of mucosal integrity in the intestine and in the stomach, could mediate the pH fluctuation necessary for mucin exocytosis or assist membrane trafficking of other proteins. Plays a role in photoreceptor survival and in the maintenance of intracellular pH homeostasis in retinal pigment epithelium (RPE cells). This chain is Sodium/hydrogen exchanger 8 (Slc9a8), found in Mus musculus (Mouse).